A 481-amino-acid polypeptide reads, in one-letter code: Tryptophan biosynthesis protein TrpCF (481 aa).

Residues 1–283 (MKMTDFNTQQ…LAVRKVTLGE (283 aa)) form an indole-3-glycerol phosphate synthase region. Residues 284-481 (NKVCGLTHPD…QAAFHAIRNY (198 aa)) form an N-(5'-phosphoribosyl)anthranilate isomerase region.

This sequence in the N-terminal section; belongs to the TrpC family. In the C-terminal section; belongs to the TrpF family. Monomer.

It carries out the reaction N-(5-phospho-beta-D-ribosyl)anthranilate = 1-(2-carboxyphenylamino)-1-deoxy-D-ribulose 5-phosphate. The catalysed reaction is 1-(2-carboxyphenylamino)-1-deoxy-D-ribulose 5-phosphate + H(+) = (1S,2R)-1-C-(indol-3-yl)glycerol 3-phosphate + CO2 + H2O. Its pathway is amino-acid biosynthesis; L-tryptophan biosynthesis; L-tryptophan from chorismate: step 3/5. It participates in amino-acid biosynthesis; L-tryptophan biosynthesis; L-tryptophan from chorismate: step 4/5. Its function is as follows. Bifunctional enzyme that catalyzes two sequential steps of tryptophan biosynthetic pathway. The first reaction is catalyzed by the isomerase, coded by the TrpF domain; the second reaction is catalyzed by the synthase, coded by the TrpC domain. The protein is Tryptophan biosynthesis protein TrpCF (trpC) of Vibrio parahaemolyticus serotype O3:K6 (strain RIMD 2210633).